A 180-amino-acid polypeptide reads, in one-letter code: Inosine/xanthosine triphosphatase (180 aa).

Residue 8 to 13 (TTNPAK) participates in substrate binding. The Mg(2+) site is built by aspartate 38 and glutamate 68. 68–69 (EA) serves as a coordination point for substrate.

Belongs to the YjjX NTPase family. Homodimer. The cofactor is Mg(2+). It depends on Mn(2+) as a cofactor.

The catalysed reaction is XTP + H2O = XDP + phosphate + H(+). It carries out the reaction ITP + H2O = IDP + phosphate + H(+). Its function is as follows. Phosphatase that hydrolyzes non-canonical purine nucleotides such as XTP and ITP to their respective diphosphate derivatives. Probably excludes non-canonical purines from DNA/RNA precursor pool, thus preventing their incorporation into DNA/RNA and avoiding chromosomal lesions. The chain is Inosine/xanthosine triphosphatase from Yersinia pseudotuberculosis serotype IB (strain PB1/+).